The chain runs to 444 residues: Proline--tRNA ligase (444 aa).

The protein belongs to the class-II aminoacyl-tRNA synthetase family. ProS type 2 subfamily. Homodimer.

Its subcellular location is the cytoplasm. It catalyses the reaction tRNA(Pro) + L-proline + ATP = L-prolyl-tRNA(Pro) + AMP + diphosphate. Functionally, catalyzes the attachment of proline to tRNA(Pro) in a two-step reaction: proline is first activated by ATP to form Pro-AMP and then transferred to the acceptor end of tRNA(Pro). In Bradyrhizobium sp. (strain BTAi1 / ATCC BAA-1182), this protein is Proline--tRNA ligase.